We begin with the raw amino-acid sequence, 478 residues long: Shikimate biosynthesis protein AroDE (478 aa).

Positions 1–208 are 3-dehydroquinate dehydratase; it reads MLCTTISGPS…LKHHYFYNFA (208 aa). 3-dehydroquinate is bound by residues serine 21, 29 to 31, and 55 to 57; these read EMR and AWK. Histidine 110 acts as the Proton donor/acceptor; for 3-dehydroquinate dehydratase activity in catalysis. Lysine 133 functions as the Schiff-base intermediate with substrate; for 3-dehydroquinate dehydratase activity in the catalytic mechanism. The 3-dehydroquinate site is built by arginine 171 and glutamine 196. Positions 209–478 are shikimate 5-dehydrogenase; sequence SLSAQSPICA…VLASLFSIAP (270 aa). 226–228 is a shikimate binding site; that stretch reads SIG. Lysine 277 functions as the Proton acceptor; for shikimate dehydrogenase activity in the catalytic mechanism. Shikimate is bound by residues asparagine 298 and aspartate 313. Residues 337 to 341, 360 to 362, and glycine 435 contribute to the NADP(+) site; these read GAGGA and NRT. Residue glutamine 442 participates in shikimate binding.

The protein in the N-terminal section; belongs to the type-I 3-dehydroquinase family. This sequence in the C-terminal section; belongs to the shikimate dehydrogenase family.

It carries out the reaction 3-dehydroquinate = 3-dehydroshikimate + H2O. The enzyme catalyses shikimate + NADP(+) = 3-dehydroshikimate + NADPH + H(+). It functions in the pathway metabolic intermediate biosynthesis; chorismate biosynthesis; chorismate from D-erythrose 4-phosphate and phosphoenolpyruvate: step 3/7. Its pathway is metabolic intermediate biosynthesis; chorismate biosynthesis; chorismate from D-erythrose 4-phosphate and phosphoenolpyruvate: step 4/7. Functionally, bifunctional enzyme that catalyzes two sequential steps of the aromatic amino acids biosynthetic pathway. In the first reaction, the AroD domain catalyzes the cis-dehydration of 3-dehydroquinate (DHQ) and introduces the first double bond of the aromatic ring to yield 3-dehydroshikimate; in the second reaction, the AroE domain catalyzes the reversible NADPH linked reduction of 3-dehydroshikimate (DHSA) to yield shikimate (SA). This Chlamydia trachomatis serovar D (strain ATCC VR-885 / DSM 19411 / UW-3/Cx) protein is Shikimate biosynthesis protein AroDE.